The sequence spans 95 residues: Co-chaperonin GroES (95 aa).

Belongs to the GroES chaperonin family. In terms of assembly, heptamer of 7 subunits arranged in a ring. Interacts with the chaperonin GroEL.

The protein localises to the cytoplasm. In terms of biological role, together with the chaperonin GroEL, plays an essential role in assisting protein folding. The GroEL-GroES system forms a nano-cage that allows encapsulation of the non-native substrate proteins and provides a physical environment optimized to promote and accelerate protein folding. GroES binds to the apical surface of the GroEL ring, thereby capping the opening of the GroEL channel. The protein is Co-chaperonin GroES of Ruegeria sp. (strain TM1040) (Silicibacter sp.).